Here is a 551-residue protein sequence, read N- to C-terminus: Scaffold protein OPG125 (551 aa).

The protein belongs to the orthopoxvirus protein OPG125 family. In terms of assembly, homotrimer. Self-assembles to form a layer. Interacts with OPG158 (via N-terminus); this interaction is necessary for OPG125 association with membranes.

The protein resides in the membrane. Its function is as follows. Scaffold protein which forms a transitory spherical honeycomb lattice providing curvature and rigidity to the convex membrane of crescent and immature virions (IV). This association occurs concomitantly with viral membrane formation. Targeted by the drug rifampicin, which prevents the formation of this lattice, and hence virus morphogenesis. In the presence of rifampicin, irregularly shaped membranes that lack the honeycomb layer accumulate around areas of electron-dense viroplasm. This layer is lost from virions during maturation from IV to mature virion (MV), through the proteolysis of OPG158 N-terminus. The chain is Scaffold protein OPG125 (OPG125) from Vaccinia virus (strain Ankara) (VACV).